Consider the following 232-residue polypeptide: Ribose-5-phosphate isomerase A (232 aa).

Substrate-binding positions include 28 to 31 (TGST), 83 to 86 (DGAD), and 96 to 99 (KGGG). E105 serves as the catalytic Proton acceptor. K123 serves as a coordination point for substrate.

It belongs to the ribose 5-phosphate isomerase family. As to quaternary structure, homodimer.

It catalyses the reaction aldehydo-D-ribose 5-phosphate = D-ribulose 5-phosphate. Its pathway is carbohydrate degradation; pentose phosphate pathway; D-ribose 5-phosphate from D-ribulose 5-phosphate (non-oxidative stage): step 1/1. In terms of biological role, catalyzes the reversible conversion of ribose-5-phosphate to ribulose 5-phosphate. The polypeptide is Ribose-5-phosphate isomerase A (Allorhizobium ampelinum (strain ATCC BAA-846 / DSM 112012 / S4) (Agrobacterium vitis (strain S4))).